The following is a 79-amino-acid chain: Sigma-O factor regulatory protein RsoA (79 aa).

Together with RNA polymerase sigma factor SigO, positively regulates the expression of at least three operons, including oxdC-yvrL, sigO-rsoA and yvrJ. Required for the acid stress-dependent induction of the oxalate decarboxylase oxdC. This chain is Sigma-O factor regulatory protein RsoA (rsoA), found in Bacillus subtilis (strain 168).